The following is a 504-amino-acid chain: ATP synthase subunit alpha 2 (504 aa).

169–176 (GDRQTGKT) provides a ligand contact to ATP.

Belongs to the ATPase alpha/beta chains family. In terms of assembly, F-type ATPases have 2 components, CF(1) - the catalytic core - and CF(0) - the membrane proton channel. CF(1) has five subunits: alpha(3), beta(3), gamma(1), delta(1), epsilon(1). CF(0) has three main subunits: a(1), b(2) and c(9-12). The alpha and beta chains form an alternating ring which encloses part of the gamma chain. CF(1) is attached to CF(0) by a central stalk formed by the gamma and epsilon chains, while a peripheral stalk is formed by the delta and b chains.

It localises to the cell membrane. The enzyme catalyses ATP + H2O + 4 H(+)(in) = ADP + phosphate + 5 H(+)(out). Functionally, produces ATP from ADP in the presence of a proton gradient across the membrane. The alpha chain is a regulatory subunit. This is ATP synthase subunit alpha 2 from Listeria monocytogenes serovar 1/2a (strain ATCC BAA-679 / EGD-e).